The primary structure comprises 267 residues: 3-methyl-2-oxobutanoate hydroxymethyltransferase (267 aa).

Mg(2+) is bound by residues D41 and D80. Residues 41–42 (DS), D80, and K109 each bind 3-methyl-2-oxobutanoate. Mg(2+) is bound at residue E111. Residue E178 is the Proton acceptor of the active site.

The protein belongs to the PanB family. In terms of assembly, homodecamer; pentamer of dimers. It depends on Mg(2+) as a cofactor.

It localises to the cytoplasm. The catalysed reaction is 3-methyl-2-oxobutanoate + (6R)-5,10-methylene-5,6,7,8-tetrahydrofolate + H2O = 2-dehydropantoate + (6S)-5,6,7,8-tetrahydrofolate. It functions in the pathway cofactor biosynthesis; (R)-pantothenate biosynthesis; (R)-pantoate from 3-methyl-2-oxobutanoate: step 1/2. Functionally, catalyzes the reversible reaction in which hydroxymethyl group from 5,10-methylenetetrahydrofolate is transferred onto alpha-ketoisovalerate to form ketopantoate. This Kosmotoga olearia (strain ATCC BAA-1733 / DSM 21960 / TBF 19.5.1) protein is 3-methyl-2-oxobutanoate hydroxymethyltransferase.